The following is a 167-amino-acid chain: Heme-degrading monooxygenase (167 aa).

An important for catalysis region spans residues 1 to 50; that stretch reads MKKVFITTGTEHYLRQLMANYTGGNVTLLQNFSQSLLYQESTGEKLFQEG. Residues 67–154 form the ABM domain; it reads VVVFEYIHLR…NNTQSGFSHE (88 aa).

This sequence belongs to the antibiotic biosynthesis monooxygenase family. As to quaternary structure, monomer.

Its subcellular location is the cytoplasm. Catalyzes the degradation of heme to biliverdin in the presence of a suitable electron donor such as ascorbate, with the subsequent release of iron. Hardly any CO is released by the heme degradation reaction. Binds heme. Allows bacterial pathogens to use the host heme as an iron source. Release of iron from heme may play a crucial role in the pathogenicity of L.monocytogenes. The polypeptide is Heme-degrading monooxygenase (Listeria monocytogenes serovar 1/2a (strain ATCC BAA-679 / EGD-e)).